Here is a 273-residue protein sequence, read N- to C-terminus: SPbeta prophage-derived uncharacterized protein YomF (273 aa).

Positions 119-149 (VIETLQGLIDEAEDTIIRMNERIAECERVTK) form a coiled coil.

This Bacillus subtilis (strain 168) protein is SPbeta prophage-derived uncharacterized protein YomF (yomF).